The following is a 428-amino-acid chain: Phosphomethylpyrimidine synthase 1 (428 aa).

Substrate is bound by residues N65, M94, Y123, H158, S180–G182, D221–R224, and E260. H264 is a binding site for Zn(2+). Substrate is bound at residue Y287. A Zn(2+)-binding site is contributed by H328. Positions 405, 408, and 412 each coordinate [4Fe-4S] cluster.

The protein belongs to the ThiC family. [4Fe-4S] cluster serves as cofactor.

It carries out the reaction 5-amino-1-(5-phospho-beta-D-ribosyl)imidazole + S-adenosyl-L-methionine = 4-amino-2-methyl-5-(phosphooxymethyl)pyrimidine + CO + 5'-deoxyadenosine + formate + L-methionine + 3 H(+). It participates in cofactor biosynthesis; thiamine diphosphate biosynthesis. Its function is as follows. Catalyzes the synthesis of the hydroxymethylpyrimidine phosphate (HMP-P) moiety of thiamine from aminoimidazole ribotide (AIR) in a radical S-adenosyl-L-methionine (SAM)-dependent reaction. The polypeptide is Phosphomethylpyrimidine synthase 1 (Methanosarcina mazei (strain ATCC BAA-159 / DSM 3647 / Goe1 / Go1 / JCM 11833 / OCM 88) (Methanosarcina frisia)).